We begin with the raw amino-acid sequence, 159 residues long: UPF0336 protein MAP_4107 (159 aa).

Belongs to the UPF0336 family.

This Mycolicibacterium paratuberculosis (strain ATCC BAA-968 / K-10) (Mycobacterium paratuberculosis) protein is UPF0336 protein MAP_4107.